Here is a 954-residue protein sequence, read N- to C-terminus: E3 ubiquitin-protein ligase arkadia (954 aa).

The segment covering 50–66 (LCSDTNKQQRDLNSNGT) has biased composition (polar residues). Disordered stretches follow at residues 50-175 (LCSD…VSSL) and 193-276 (RKRF…SGGM). Composition is skewed to low complexity over residues 112–131 (SSFS…GDSD) and 232–251 (SSSS…SSST). An SUMO interaction motif 1 (SIM) motif is present at residues 280-284 (VVVIE). The SUMO interaction motif 2 (SIM) signature appears at 305 to 311 (EVEIVTV). 3 disordered regions span residues 318–346 (RTTL…RNRV), 364–452 (TVDE…MPRL), and 485–509 (HFPH…SFRD). Positions 328-337 (WGQNTQSGRT) are enriched in polar residues. Residues 360–364 (VVDLT) carry the SUMO interaction motif 3 (SIM) motif. The span at 385-395 (VSTVSSNTSTS) shows a compositional bias: low complexity. The segment covering 485–496 (HFPHHHHHHHQS) has biased composition (basic residues). The ubiquitin binding stretch occupies residues 867 to 869 (YPH). Zn(2+)-binding residues include Cys-902 and Cys-905. Residues 902 to 943 (CTICLSILEEGEDVRRLPCMHLFHQVCVDQWLITNKKCPICR) form an RING-type; atypical zinc finger. The ubiquitin binding stretch occupies residues 917 to 921 (RLPCM). Positions 925 and 928 each coordinate Zn(2+).

This sequence belongs to the Arkadia family. As to quaternary structure, monomer.

It localises to the nucleus. The protein resides in the cytoplasm. Its subcellular location is the PML body. The catalysed reaction is S-ubiquitinyl-[E2 ubiquitin-conjugating enzyme]-L-cysteine + [acceptor protein]-L-lysine = [E2 ubiquitin-conjugating enzyme]-L-cysteine + N(6)-ubiquitinyl-[acceptor protein]-L-lysine.. It participates in protein modification; protein ubiquitination. Its activity is regulated as follows. Binds free ubiquitin non-covalently via its RING-type zinc finger. Ubiquitin-binding leads to enhance the E3 ubiquitin-protein ligase activity by stabilizing the ubiquitin-conjugating enzyme E2 (donor ubiquitin) in the 'closed' conformation and activating ubiquitin transfer. Its function is as follows. E3 ubiquitin-protein ligase required for mesoderm patterning during embryonic development. Acts as an enhancer of the transcriptional responses of the smad2/smad3 effectors, which are activated downstream of BMP. Acts by mediating ubiquitination and degradation of SMAD inhibitors such as smad7, inducing their proteasomal degradation and thereby enhancing the transcriptional activity of TGF-beta and BMP. Specifically binds polysumoylated chains via SUMO interaction motifs (SIMs) and mediates ubiquitination of sumoylated substrates. The regulation of the BMP-SMAD signaling is however independent of sumoylation and is not dependent of SUMO interaction motifs (SIMs). The chain is E3 ubiquitin-protein ligase arkadia (rnf111) from Xenopus tropicalis (Western clawed frog).